Reading from the N-terminus, the 316-residue chain is Beta-ketoacyl-[acyl-carrier-protein] synthase III (316 aa).

Active-site residues include Cys-112 and His-243. An ACP-binding region spans residues 244–248; sequence QANLR. Asn-273 is a catalytic residue.

It belongs to the thiolase-like superfamily. FabH family. Homodimer.

The protein resides in the cytoplasm. It carries out the reaction malonyl-[ACP] + acetyl-CoA + H(+) = 3-oxobutanoyl-[ACP] + CO2 + CoA. Its pathway is lipid metabolism; fatty acid biosynthesis. Functionally, catalyzes the condensation reaction of fatty acid synthesis by the addition to an acyl acceptor of two carbons from malonyl-ACP. Catalyzes the first condensation reaction which initiates fatty acid synthesis and may therefore play a role in governing the total rate of fatty acid production. Possesses both acetoacetyl-ACP synthase and acetyl transacylase activities. Its substrate specificity determines the biosynthesis of branched-chain and/or straight-chain of fatty acids. The chain is Beta-ketoacyl-[acyl-carrier-protein] synthase III from Histophilus somni (strain 129Pt) (Haemophilus somnus).